The primary structure comprises 255 residues: Folate receptor alpha (255 aa).

A signal peptide spans 1-24; that stretch reads MAHLMTVQLLLLVMWMAECAQSRA. 8 cysteine pairs are disulfide-bonded: Cys-35–Cys-63, Cys-55–Cys-103, Cys-64–Cys-107, Cys-87–Cys-173, Cys-94–Cys-144, Cys-133–Cys-207, Cys-137–Cys-187, and Cys-150–Cys-167. Residue Asn-67 is glycosylated (N-linked (GlcNAc...) asparagine). Residues Asp-101, Tyr-105, 122 to 126, 155 to 160, and Ser-194 each bind folate; these read WRKER and HKGWNW. Asn-159 carries an N-linked (GlcNAc...) asparagine glycan. A glycan (N-linked (GlcNAc...) asparagine) is linked at Asn-199. Ser-232 carries GPI-anchor amidated serine lipidation. The propeptide at 233 to 255 is removed in mature form; sequence GAGFHGTWPLLCSLSLVLLWVIS.

The protein belongs to the folate receptor family. In terms of processing, the secreted form is derived from the membrane-bound form either by cleavage of the GPI anchor, or/and by proteolysis catalyzed by a metalloprotease. Detected in kidney proximal tubules (at protein level).

Its subcellular location is the cell membrane. It localises to the apical cell membrane. The protein resides in the basolateral cell membrane. It is found in the secreted. The protein localises to the cytoplasmic vesicle. Its subcellular location is the clathrin-coated vesicle. It localises to the endosome. Binds to folate and reduced folic acid derivatives and mediates delivery of 5-methyltetrahydrofolate and folate analogs into the interior of cells. Has high affinity for folate and folic acid analogs at neutral pH. Exposure to slightly acidic pH after receptor endocytosis triggers a conformation change that strongly reduces its affinity for folates and mediates their release. Required for normal embryonic development and normal cell proliferation. Required for renal folate reabsorption. This chain is Folate receptor alpha (Folr1), found in Mus musculus (Mouse).